The following is a 111-amino-acid chain: Rubredoxin (111 aa).

Positions 11–62 constitute a Rubredoxin-like domain; sequence LDRFECRSCGYVYEPEKGDSKHDIAPETPFAELPINWRCPVCTAKKAAFSNI. Residues C16, C19, C49, and C52 each contribute to the Fe cation site.

The protein belongs to the rubredoxin family. Fe(3+) is required as a cofactor.

In terms of biological role, rubredoxin is a small nonheme, iron protein lacking acid-labile sulfide. Its single Fe, chelated to 4 Cys, functions as an electron acceptor and may also stabilize the conformation of the molecule. Could be involved in hydrogenase-linked redox processes. The sequence is that of Rubredoxin (rub) from Trichormus variabilis (strain ATCC 29413 / PCC 7937) (Anabaena variabilis).